The sequence spans 139 residues: Metallothiol transferase FosB (139 aa).

The 116-residue stretch at 4–119 (GINHITYSVS…DGHKLELHTG (116 aa)) folds into the VOC domain. Residues His7, His66, and Glu115 each contribute to the Mg(2+) site. Glu115 serves as the catalytic Proton donor/acceptor.

It belongs to the fosfomycin resistance protein family. FosB subfamily. Homodimer. Mg(2+) is required as a cofactor.

It localises to the cytoplasm. In terms of biological role, metallothiol transferase which confers resistance to fosfomycin by catalyzing the addition of a thiol cofactor to fosfomycin. L-cysteine is probably the physiological thiol donor. The sequence is that of Metallothiol transferase FosB from Staphylococcus epidermidis.